The primary structure comprises 961 residues: Retinoblastoma-like protein homolog lin-35 (961 aa).

Disordered stretches follow at residues 1–43 (MPKR…PPAK) and 55–129 (GGVQ…TPPP). Polar residues predominate over residues 68 to 81 (ELTQMTIKQETEGN). A compositionally biased stretch (acidic residues) spans 107 to 119 (GEDDDYEEDDADS). Phosphoserine; by CDK4 is present on serine 714. Residue threonine 719 is modified to Phosphothreonine; by CDK4.

The protein belongs to the retinoblastoma protein (RB) family. In terms of assembly, component of the DRM complex, at least composed of lin-9, lin-35, lin-37, lin-52, lin-53, lin-54, dpl-1 and efl-1. Interacts with lin-53. Interacts (via C-terminus) with dpl-1 (via C-terminus) and efl-1 (via C-terminus). Interacts (via C-terminus) with lin-8. Phosphorylated by the cyclin dependent kinase cdk-4. Phosphorylation inhibits the transcriptional repressor activity of lin-35 and allows for progression through the G1 phase of the cell cycle during postembryonic development.

It localises to the nucleus. Its function is as follows. Key regulator of cell division which acts as a transcriptional repressor and negatively regulates cell cycle progression in its active unphosphorylated form, but allows cell cycle progression when phosphorylated. When unphosphorylated and in its active form, interacts with E2F transcription factors such as efl-1 to repress their transcriptional activity and negatively regulate the progression through the G1 phase of the cell cycle during postembryonic development. May furthermore act with cell cycle regulator cki-1 to negatively regulate cell cycle progression. Acts redundantly with lin-53, fzr-1 and lin-23 to control cell cycle progression by regulating the expression of G1 phase cyclins. In particular, negatively regulates the expression of the cyclin E homolog cye-1, which is essential for the G1/S phase transition. Regulates cell division in the intestinal lineage, repressing the expression of genes such as cdc-25.2, which are required for intestinal cells to transition from the karyokinesis cell cycle (also known as nuclear division) to endoreplication, a specific growth pathway in the intestinal epithelium required for feeding and gut development in growing larvae during the L1 stage molt. Its role as a transcriptional repressor in the regulation of intestinal cell division during postembryonic development is most likely in complex with an E2F cell cycle regulatory transcription factor efl-1 and its binding partner the synthetic multivulva class B protein dpl-1. Synthetic multivulva (synMuv) class B protein. SynMuv proteins are required to repress the induction of vulval development by Ras signaling and probably act by forming the multiprotein DRM complex that represses transcription. Together with synMuv class B protein lin-53, and redundantly with synMuv class A protein lin-15A, represses transcription to control vulval development, most likely through antagonization of the Ras-signaling pathway in the major hypodermal syncytium hyp7. Acts redundantly with the transcriptional corepressor spr-1 and the zinc finger protein zfp-2 to play a role in vulval morphogenesis, promote germline proliferation and somatic gonad development. Acts redundantly with ubc-18 in the regulation of pharyngeal morphogenesis during embryonic development by negatively regulating the expression of proteins such as sup-35. Functions with the SWI/SNF complex and proteins such as pha-1 to regulate larval development. Functions redundantly with xnp-1 to regulate somatic gonad development. Acts redundantly with slr-2 to regulate the expression of intestinal genes required for nutrient utilization. Regulates transcription in response to starvation. Furthermore, in response to starvation, promotes germ cell programmed cell death by negatively regulating the expression of the anti-apoptotic protein ced-9. Conversely, in conjunction with mcd-1, efl-1 and the synthetic multivulva class B proteins dpl-1, lin-37 and lin-52, may also regulate transcription to promote programmed cell death independently of ced-1, ced-8 and ced-9 cell death pathways. Directly involved in heterochromatin formation by maintaining overall chromatin structure and, in particular, that of constitutive heterochromatin by stabilizing histone methylation. In particular, negatively regulates the expression of mes-4, a histone methyltransferase that controls the expression of germline specific genes. May play a role in double strand break formation during meiosis. May suppress sensitivity to RNAi. May play a role in the response to endoplasmic reticulum (ER) stress. This chain is Retinoblastoma-like protein homolog lin-35, found in Caenorhabditis elegans.